Here is a 197-residue protein sequence, read N- to C-terminus: Protein GrpE (197 aa).

A disordered region spans residues 1 to 39; the sequence is MSSKEQKTPEGQAPEEIIMDQHEEIEAVEPEASAEQVDP.

This sequence belongs to the GrpE family. As to quaternary structure, homodimer.

The protein resides in the cytoplasm. In terms of biological role, participates actively in the response to hyperosmotic and heat shock by preventing the aggregation of stress-denatured proteins, in association with DnaK and GrpE. It is the nucleotide exchange factor for DnaK and may function as a thermosensor. Unfolded proteins bind initially to DnaJ; upon interaction with the DnaJ-bound protein, DnaK hydrolyzes its bound ATP, resulting in the formation of a stable complex. GrpE releases ADP from DnaK; ATP binding to DnaK triggers the release of the substrate protein, thus completing the reaction cycle. Several rounds of ATP-dependent interactions between DnaJ, DnaK and GrpE are required for fully efficient folding. The protein is Protein GrpE of Escherichia coli O157:H7 (strain EC4115 / EHEC).